Reading from the N-terminus, the 125-residue chain is Glycine cleavage system H protein 1 (125 aa).

The Lipoyl-binding domain occupies 22–103 (KAYIGITDYA…PYGSWLVAVR (82 aa)). Residue K63 is modified to N6-lipoyllysine.

The protein belongs to the GcvH family. As to quaternary structure, the glycine cleavage system is composed of four proteins: P, T, L and H. Requires (R)-lipoate as cofactor.

In terms of biological role, the glycine cleavage system catalyzes the degradation of glycine. The H protein shuttles the methylamine group of glycine from the P protein to the T protein. The chain is Glycine cleavage system H protein 1 from Caldanaerobacter subterraneus subsp. tengcongensis (strain DSM 15242 / JCM 11007 / NBRC 100824 / MB4) (Thermoanaerobacter tengcongensis).